Consider the following 292-residue polypeptide: MSLLIGSHVSMSGKKMLLQSSEEAASYGATTFMIYTGAPQNTRRKAIEDLNIEAGKAHMAEHGLSNIVVHAPYIINIGNTQKPETFRLGVDFLRSEIERTEAIGAKQIVLHPGAHVGAGAEEGIKKIIEGLNEVLTEKRDVQIALETMAGKGSECGCTFEELAKIIDGVTHNERLSVCFDTCHTHDAGYDIVNDFDGVLDEFDRIIGAERIKVVHINDSKNERSARKDRHENIGHGHIGLKALDYIVHHDQFKDIPKILETPFIGKDKKDKRPPYKHEIALLRRELLEPIEK.

9 residues coordinate Zn(2+): H70, H111, E146, D180, H183, H215, D228, H230, and E260.

It belongs to the AP endonuclease 2 family. It depends on Zn(2+) as a cofactor.

It carries out the reaction Endonucleolytic cleavage to 5'-phosphooligonucleotide end-products.. Functionally, endonuclease IV plays a role in DNA repair. It cleaves phosphodiester bonds at apurinic or apyrimidinic (AP) sites, generating a 3'-hydroxyl group and a 5'-terminal sugar phosphate. The sequence is that of Probable endonuclease 4 from Shouchella clausii (strain KSM-K16) (Alkalihalobacillus clausii).